The chain runs to 119 residues: MSRVKRGVTARAKHNKVLKKAKGYYGARRKSFRIARQAVIKSGQYAYRDRRQRKRQFRALWIQRINAGARQHGLSYSRFINGLQQAGVDLDRKVLADLAVNDKAAFGALAEKAREALAA.

Belongs to the bacterial ribosomal protein bL20 family.

In terms of biological role, binds directly to 23S ribosomal RNA and is necessary for the in vitro assembly process of the 50S ribosomal subunit. It is not involved in the protein synthesizing functions of that subunit. This is Large ribosomal subunit protein bL20 from Alkalilimnicola ehrlichii (strain ATCC BAA-1101 / DSM 17681 / MLHE-1).